The following is a 162-amino-acid chain: Dihydrofolate reductase (162 aa).

The DHFR domain maps to 3–161 (KITIIAACAE…VAYTFVHYLG (159 aa)). 7–9 (IAA) is a substrate binding site. NADP(+)-binding positions include 8 to 9 (AA) and 16 to 21 (IGAGNA). Position 29 (D29) interacts with substrate. 45 to 48 (GRKT) is a binding site for NADP(+). R60 is a binding site for substrate. NADP(+) contacts are provided by residues 65–68 (ISRQ) and 98–103 (MGGAQI). T117 is a substrate binding site.

This sequence belongs to the dihydrofolate reductase family.

It carries out the reaction (6S)-5,6,7,8-tetrahydrofolate + NADP(+) = 7,8-dihydrofolate + NADPH + H(+). It participates in cofactor biosynthesis; tetrahydrofolate biosynthesis; 5,6,7,8-tetrahydrofolate from 7,8-dihydrofolate: step 1/1. In terms of biological role, key enzyme in folate metabolism. Catalyzes an essential reaction for de novo glycine and purine synthesis, and for DNA precursor synthesis. In Neisseria gonorrhoeae, this protein is Dihydrofolate reductase (folA).